The sequence spans 231 residues: Small ribosomal subunit protein uS3 (231 aa).

Residues 39-107 enclose the KH type-2 domain; the sequence is IRKFIMKTLP…GVSLNIVEIR (69 aa).

This sequence belongs to the universal ribosomal protein uS3 family. Part of the 30S ribosomal subunit. Forms a tight complex with proteins S10 and S14.

Functionally, binds the lower part of the 30S subunit head. Binds mRNA in the 70S ribosome, positioning it for translation. The protein is Small ribosomal subunit protein uS3 of Zymomonas mobilis subsp. mobilis (strain ATCC 31821 / ZM4 / CP4).